A 279-amino-acid polypeptide reads, in one-letter code: 32 kDa beta-galactoside-binding lectin (279 aa).

Galectin domains lie at 13-144 (YRSV…VHWG) and 152-279 (YESG…IQIQ). 213-219 (WGNEERE) contributes to the a beta-D-galactoside binding site.

The N-terminus is blocked.

In terms of biological role, binds galactose. The sequence is that of 32 kDa beta-galactoside-binding lectin (lec-1) from Caenorhabditis elegans.